We begin with the raw amino-acid sequence, 717 residues long: uncharacterized protein (717 aa).

The protein belongs to the asfivirus C717R family.

It localises to the virion. This is an uncharacterized protein from African swine fever virus (isolate Tick/Malawi/Lil 20-1/1983) (ASFV).